A 234-amino-acid polypeptide reads, in one-letter code: Ubiquitin domain-containing protein 2 (234 aa).

Residues 1–46 (MGGCVGAQHDSSGSLNENSEGTGVALGRNQPLKKEKPKWKSDYPMT) form a disordered region. The span at 9 to 21 (HDSSGSLNENSEG) shows a compositional bias: polar residues. The segment covering 32–41 (LKKEKPKWKS) has biased composition (basic and acidic residues). The Ubiquitin-like domain maps to 152–227 (SQLRLRLSTG…VQVIMSQPLQ (76 aa)).

Its subcellular location is the cytoplasm. The chain is Ubiquitin domain-containing protein 2 (UBTD2) from Bos taurus (Bovine).